The primary structure comprises 388 residues: LL-diaminopimelate aminotransferase (388 aa).

Positions 13, 38, 102, 126, and 176 each coordinate substrate. Pyridoxal 5'-phosphate is bound by residues 101 to 102 (SK), Tyr-126, Asn-176, Tyr-207, and 235 to 237 (SLS). Lys-238 bears the N6-(pyridoxal phosphate)lysine mark. Residue Arg-246 participates in pyridoxal 5'-phosphate binding. Arg-364 serves as a coordination point for substrate.

The protein belongs to the class-I pyridoxal-phosphate-dependent aminotransferase family. LL-diaminopimelate aminotransferase subfamily. Homodimer. It depends on pyridoxal 5'-phosphate as a cofactor.

The catalysed reaction is (2S,6S)-2,6-diaminopimelate + 2-oxoglutarate = (S)-2,3,4,5-tetrahydrodipicolinate + L-glutamate + H2O + H(+). It functions in the pathway amino-acid biosynthesis; L-lysine biosynthesis via DAP pathway; LL-2,6-diaminopimelate from (S)-tetrahydrodipicolinate (aminotransferase route): step 1/1. Its function is as follows. Involved in the synthesis of meso-diaminopimelate (m-DAP or DL-DAP), required for both lysine and peptidoglycan biosynthesis. Catalyzes the direct conversion of tetrahydrodipicolinate to LL-diaminopimelate. The polypeptide is LL-diaminopimelate aminotransferase (Dehalococcoides mccartyi (strain ATCC BAA-2266 / KCTC 15142 / 195) (Dehalococcoides ethenogenes (strain 195))).